We begin with the raw amino-acid sequence, 236 residues long: MARHAIFSALCVLGLVAAALPQFATAATASDDELMSRIRNSDFFDGQAPVDSLRPTNAGVDSKGTDDHLTTSMDKASVESQLPRREPLETEPDEQEEVHFRKRGVRSDAEVTDDNIYEEHTDRKVVPRKSEGKRSFKDLLKKLALPAVGMGASYFAADRLVPELTEEQQRGDEPLTTGQNVGTVLGFAALAAAAAFLGMGLTRTYRHFSPRKNRSRQPALEQEVPESGEDGEDARQ.

An N-terminal signal peptide occupies residues 1 to 26 (MARHAIFSALCVLGLVAAALPQFATA). The disordered stretch occupies residues 45–106 (DGQAPVDSLR…EVHFRKRGVR (62 aa)). Residues 70 to 80 (TTSMDKASVES) are compositionally biased toward polar residues. The required for dimerization, interactions with liposomes and liposome tubulation stretch occupies residues 147–236 (AVGMGASYFA…SGEDGEDARQ (90 aa)). Residues 181-201 (VGTVLGFAALAAAAAFLGMGL) traverse the membrane as a helical segment. Positions 208 to 236 (FSPRKNRSRQPALEQEVPESGEDGEDARQ) are disordered. Asparagine 213 is a glycosylation site (N-linked (GlcNAc...) asparagine). Acidic residues predominate over residues 223-236 (EVPESGEDGEDARQ).

Belongs to the Gra7 family. Homodimer. Can form higher order homooligomers in a lipid-stimulated manner. Component of a complex at least composed of ROP18, GRA7 and ROP2. Interacts with ROP5. Interacts with ROP18 in the absence of ROP5. Interacts with mouse IRGA6/IIGP1 in GTP-dependent manner; the interaction results in faster turnover of the GTP-activated IRGA6/IIGP1 oligomer. Interacts with mouse TRAF6 (via N-terminal RING domain); the interaction plays a role in GRA7-induced pro-inflammatory cytokine production in mouse macrophages.

It is found in the secreted. The protein localises to the parasitophorous vacuole lumen. Its subcellular location is the parasitophorous vacuole membrane. It localises to the cytoplasm. The protein resides in the host cytoplasm. It is found in the cytoplasmic vesicle. The protein localises to the secretory vesicle. In terms of biological role, binds lipid bilayers, sequesters host endocytic organelles in the parasitophorous vacuole space, and causes their deformation and remodeling. Plays a role in nutrient acquisition from the host. In complex with ROP18, targets immunity-related GTPases (IRGs) to prevent IRG-mediated parasite killing by mouse cells. Important component within a kinase complex, contributing to phosphorylation of mouse IRGA6/IIGP1, an immunity-related GTPase that protects mice from infection by certain intracellular pathogens, by Toxoplasma gondii ROP5 and ROP18. Induces pro-inflammatory cytokine production in host macrophages. Activates host pro-inflammatory signaling pathways in a MyD88-dependent manner. Triggers generation of reactive oxygen species (ROS) in host cells. Activates MAPK pathway in host cells. Activates host NF-kappa-B signaling pathway by interacting with TRAF6 and modulating the 'Lys-63'-linked polyubiquitination of TRAF6. The polypeptide is Dense granule protein 7 (Toxoplasma gondii).